The chain runs to 162 residues: Large ribosomal subunit protein uL10 (162 aa).

Belongs to the universal ribosomal protein uL10 family. Part of the ribosomal stalk of the 50S ribosomal subunit. The N-terminus interacts with L11 and the large rRNA to form the base of the stalk. The C-terminus forms an elongated spine to which L12 dimers bind in a sequential fashion forming a multimeric L10(L12)X complex.

Its function is as follows. Forms part of the ribosomal stalk, playing a central role in the interaction of the ribosome with GTP-bound translation factors. The sequence is that of Large ribosomal subunit protein uL10 (rplJ) from Borreliella burgdorferi (strain ATCC 35210 / DSM 4680 / CIP 102532 / B31) (Borrelia burgdorferi).